The sequence spans 362 residues: Putative integrase ORF3 (362 aa).

Residues 179–359 enclose the Integrase catalytic domain; that stretch reads YEVKEIGLLQ…TPFNFLNSLS (181 aa). Positions 190 and 256 each coordinate Mg(2+).

The protein belongs to the plectrovirus integrase ORF3 family.

In terms of biological role, this protein may encode an integrase, which is necessary for integration of the viral DNA into host genome. The chain is Putative integrase ORF3 from Spiroplasma melliferum (SpV1).